The chain runs to 1070 residues: DNA-directed RNA polymerase subunit beta (1070 aa).

This sequence belongs to the RNA polymerase beta chain family. In terms of assembly, in plastids the minimal PEP RNA polymerase catalytic core is composed of four subunits: alpha, beta, beta', and beta''. When a (nuclear-encoded) sigma factor is associated with the core the holoenzyme is formed, which can initiate transcription.

Its subcellular location is the plastid. It is found in the chloroplast. It catalyses the reaction RNA(n) + a ribonucleoside 5'-triphosphate = RNA(n+1) + diphosphate. Functionally, DNA-dependent RNA polymerase catalyzes the transcription of DNA into RNA using the four ribonucleoside triphosphates as substrates. This Solanum bulbocastanum (Wild potato) protein is DNA-directed RNA polymerase subunit beta.